The following is a 247-amino-acid chain: Carboxy-S-adenosyl-L-methionine synthase (247 aa).

S-adenosyl-L-methionine contacts are provided by residues Y39, 64 to 66 (GCS), 89 to 90 (DN), 117 to 118 (DI), N132, and R199.

It belongs to the class I-like SAM-binding methyltransferase superfamily. Cx-SAM synthase family. In terms of assembly, homodimer.

It catalyses the reaction prephenate + S-adenosyl-L-methionine = carboxy-S-adenosyl-L-methionine + 3-phenylpyruvate + H2O. In terms of biological role, catalyzes the conversion of S-adenosyl-L-methionine (SAM) to carboxy-S-adenosyl-L-methionine (Cx-SAM). In Salmonella arizonae (strain ATCC BAA-731 / CDC346-86 / RSK2980), this protein is Carboxy-S-adenosyl-L-methionine synthase.